We begin with the raw amino-acid sequence, 252 residues long: Small ribosomal subunit protein eS1B (252 aa).

Residue A2 is modified to N-acetylalanine; partial. Residue S251 is modified to Phosphoserine.

It belongs to the eukaryotic ribosomal protein eS1 family. As to quaternary structure, component of the small ribosomal subunit (SSU). Mature yeast ribosomes consist of a small (40S) and a large (60S) subunit. The 40S small subunit contains 1 molecule of ribosomal RNA (18S rRNA) and at least 33 different proteins. The large 60S subunit contains 3 rRNA molecules (25S, 5.8S and 5S rRNA) and at least 46 different proteins. eS1 interacts directly with uS11 and eS26, which form part of the mRNA exit tunnel.

It is found in the cytoplasm. Its function is as follows. Component of the ribosome, a large ribonucleoprotein complex responsible for the synthesis of proteins in the cell. The small ribosomal subunit (SSU) binds messenger RNAs (mRNAs) and translates the encoded message by selecting cognate aminoacyl-transfer RNA (tRNA) molecules. The large subunit (LSU) contains the ribosomal catalytic site termed the peptidyl transferase center (PTC), which catalyzes the formation of peptide bonds, thereby polymerizing the amino acids delivered by tRNAs into a polypeptide chain. The nascent polypeptides leave the ribosome through a tunnel in the LSU and interact with protein factors that function in enzymatic processing, targeting, and the membrane insertion of nascent chains at the exit of the ribosomal tunnel. This is Small ribosomal subunit protein eS1B (rps102) from Schizosaccharomyces pombe (strain 972 / ATCC 24843) (Fission yeast).